The following is a 256-amino-acid chain: 1-(5-phosphoribosyl)-5-[(5-phosphoribosylamino)methylideneamino] imidazole-4-carboxamide isomerase (256 aa).

The active-site Proton acceptor is aspartate 8. The Proton donor role is filled by aspartate 129.

It belongs to the HisA/HisF family.

It is found in the cytoplasm. The catalysed reaction is 1-(5-phospho-beta-D-ribosyl)-5-[(5-phospho-beta-D-ribosylamino)methylideneamino]imidazole-4-carboxamide = 5-[(5-phospho-1-deoxy-D-ribulos-1-ylimino)methylamino]-1-(5-phospho-beta-D-ribosyl)imidazole-4-carboxamide. Its pathway is amino-acid biosynthesis; L-histidine biosynthesis; L-histidine from 5-phospho-alpha-D-ribose 1-diphosphate: step 4/9. In Prochlorococcus marinus (strain NATL2A), this protein is 1-(5-phosphoribosyl)-5-[(5-phosphoribosylamino)methylideneamino] imidazole-4-carboxamide isomerase.